We begin with the raw amino-acid sequence, 771 residues long: Probable exo-1,4-beta-xylosidase bxlB (771 aa).

The first 25 residues, 1–25 (MVGLTPQHYGNAIALMTYLASTALA), serve as a signal peptide directing secretion. Asn67 carries an N-linked (GlcNAc...) asparagine glycan. Asp293 is a catalytic residue. Residues Asn305, Asn345, Asn423, Asn462, and Asn463 are each glycosylated (N-linked (GlcNAc...) asparagine).

It belongs to the glycosyl hydrolase 3 family.

It is found in the secreted. It catalyses the reaction Hydrolysis of (1-&gt;4)-beta-D-xylans, to remove successive D-xylose residues from the non-reducing termini.. It functions in the pathway glycan degradation; xylan degradation. Xylan 1,4-beta-xylosidase involved in the hydrolysis of xylan, a major structural heterogeneous polysaccharide found in plant biomass representing the second most abundant polysaccharide in the biosphere, after cellulose. The sequence is that of Probable exo-1,4-beta-xylosidase bxlB (bxlB) from Aspergillus clavatus (strain ATCC 1007 / CBS 513.65 / DSM 816 / NCTC 3887 / NRRL 1 / QM 1276 / 107).